The chain runs to 97 residues: HssA/B-like protein 32 (97 aa).

2 disordered regions span residues 1-23 and 62-97; these read MTLFSSISSMSSSMTSSKSSLAS and AKSSGGSCGGKGGSHNHGHGHGPHGHGGKGSGGSCS. The segment covering 62 to 74 has biased composition (gly residues); that stretch reads AKSSGGSCGGKGG. Residues 75 to 88 show a composition bias toward basic residues; it reads SHNHGHGHGPHGHG.

This sequence belongs to the hssA/B family.

The chain is HssA/B-like protein 32 (hssl32) from Dictyostelium discoideum (Social amoeba).